We begin with the raw amino-acid sequence, 236 residues long: Pyridoxal 5'-phosphate synthase subunit PdxT (236 aa).

61 to 63 (GES) serves as a coordination point for L-glutamine. Catalysis depends on C93, which acts as the Nucleophile. L-glutamine is bound by residues R127 and 163–164 (IR). Active-site charge relay system residues include H215 and E217.

It belongs to the glutaminase PdxT/SNO family. In terms of assembly, in the presence of PdxS, forms a dodecamer of heterodimers. Only shows activity in the heterodimer.

It catalyses the reaction aldehydo-D-ribose 5-phosphate + D-glyceraldehyde 3-phosphate + L-glutamine = pyridoxal 5'-phosphate + L-glutamate + phosphate + 3 H2O + H(+). It carries out the reaction L-glutamine + H2O = L-glutamate + NH4(+). Its pathway is cofactor biosynthesis; pyridoxal 5'-phosphate biosynthesis. In terms of biological role, catalyzes the hydrolysis of glutamine to glutamate and ammonia as part of the biosynthesis of pyridoxal 5'-phosphate. The resulting ammonia molecule is channeled to the active site of PdxS. This is Pyridoxal 5'-phosphate synthase subunit PdxT from Pseudarthrobacter chlorophenolicus (strain ATCC 700700 / DSM 12829 / CIP 107037 / JCM 12360 / KCTC 9906 / NCIMB 13794 / A6) (Arthrobacter chlorophenolicus).